A 224-amino-acid polypeptide reads, in one-letter code: Charged multivesicular body protein 3 (224 aa).

A lipid anchor (N-myristoyl glycine) is attached at Gly2. Positions 2–113 (GLFGKTQEKP…LQKSTEVMKA (112 aa)) are intramolecular interaction with C-terminus. A coiled-coil region spans residues 22–54 (KIRKEMRVVDRQIRDIQREEEKVKRSVKDAAKK). 2 important for autoinhibitory function regions span residues 59–64 (VCVVLA) and 168–169 (IL). The stretch at 149–224 (ESMDDQEEME…MQSRLATLRS (76 aa)) forms a coiled coil. An intramolecular interaction with N-terminus region spans residues 151 to 222 (MDDQEEMEEA…EAMQSRLATL (72 aa)). The interaction with VPS4A stretch occupies residues 151–224 (MDDQEEMEEA…MQSRLATLRS (74 aa)). Residue Lys179 forms a Glycyl lysine isopeptide (Lys-Gly) (interchain with G-Cter in ubiquitin) linkage. The interval 180–224 (APSKVTDALPEPEPAGAMAASEEGEEEEDEEDLEAMQSRLATLRS) is disordered. 3 interaction with STAMBP regions span residues 196–224 (AMAA…TLRS), 205–209 (EEEDE), and 223–224 (RS). Residue Ser200 is modified to Phosphoserine. An MIT-interacting motif motif is present at residues 201–213 (EEGEEEEDEEDLE). The span at 201–213 (EEGEEEEDEEDLE) shows a compositional bias: acidic residues.

Belongs to the SNF7 family. As to quaternary structure, probable core component of the endosomal sorting required for transport complex III (ESCRT-III). ESCRT-III components are thought to multimerize to form a flat lattice on the perimeter membrane of the endosome. Several assembly forms of ESCRT-III may exist that interact and act sequentially. Forms a metastable monomer in solution; its core structure (without part of the putative autoinhibitory C-terminal acidic region) oligomerizes into a flat lattice via two different dimerization interfaces. In vitro, heteromerizes with CHMP2A (but not CHMP4) to form helical tubular structures that expose membrane-interacting sites on the outside whereas VPS4B can associate on the inside of the tubule. May interact with IGFBP7; the relevance of such interaction however remains unclear. Interacts with CHMP2A. Interacts with CHMP4A; the interaction requires the release of CHMP4A autoinhibition. Interacts with VPS4A. Interacts with STAMBP; the interaction appears to relieve the autoinhibition of CHMP3. Interacts with VTA1. As to expression, expressed in lung, testis, heart, spleen, skeletal muscle, kidney, liver and brain.

It is found in the cytoplasm. It localises to the cytosol. The protein localises to the membrane. The protein resides in the endosome. Its subcellular location is the late endosome membrane. Probable core component of the endosomal sorting required for transport complex III (ESCRT-III) which is involved in multivesicular bodies (MVBs) formation and sorting of endosomal cargo proteins into MVBs. MVBs contain intraluminal vesicles (ILVs) that are generated by invagination and scission from the limiting membrane of the endosome and mostly are delivered to lysosomes enabling degradation of membrane proteins, such as stimulated growth factor receptors, lysosomal enzymes and lipids. The MVB pathway appears to require the sequential function of ESCRT-O, -I,-II and -III complexes. ESCRT-III proteins mostly dissociate from the invaginating membrane before the ILV is released. The ESCRT machinery also functions in topologically equivalent membrane fission events, such as the terminal stages of cytokinesis. ESCRT-III proteins are believed to mediate the necessary vesicle extrusion and/or membrane fission activities, possibly in conjunction with the AAA ATPase VPS4. Selectively binds to phosphatidylinositol 3,5-bisphosphate PtdIns(3,5)P2 and PtdIns(3,4)P2 in preference to other phosphoinositides tested. Involved in late stages of cytokinesis. Plays a role in endosomal sorting/trafficking of EGF receptor. The protein is Charged multivesicular body protein 3 (Chmp3) of Mus musculus (Mouse).